Consider the following 268-residue polypeptide: Protein MGF 300-1L (268 aa).

At 1-175 (MVSLTTCCLK…QTFKTFYAKN (175 aa)) the chain is on the cytoplasmic side. Residues 176–193 (YSLSTLYCIFLAIYYKLY) traverse the membrane as a helical segment. Residues 194-268 (TALRKMVKIY…MYAFSQNDYW (75 aa)) are Extracellular-facing. The N-linked (GlcNAc...) asparagine; by host glycan is linked to Asn227.

Belongs to the asfivirus MGF 300 family.

It is found in the host membrane. Plays a role in virus cell tropism, and may be required for efficient virus replication in macrophages. In African swine fever virus (strain Badajoz 1971 Vero-adapted) (Ba71V), this protein is Protein MGF 300-1L.